Reading from the N-terminus, the 320-residue chain is Cytochrome f (320 aa).

A signal peptide spans 1-35; the sequence is MQIRNTFSSLKGEITRFISVSLMIYIITRASISNA. Heme contacts are provided by Tyr36, Cys56, Cys59, and His60. Residues 286 to 306 traverse the membrane as a helical segment; that stretch reads VQGLLFFLASVVLAQIFLVLK.

The protein belongs to the cytochrome f family. In terms of assembly, the 4 large subunits of the cytochrome b6-f complex are cytochrome b6, subunit IV (17 kDa polypeptide, petD), cytochrome f and the Rieske protein, while the 4 small subunits are PetG, PetL, PetM and PetN. The complex functions as a dimer. Heme is required as a cofactor.

The protein resides in the plastid. Its subcellular location is the chloroplast thylakoid membrane. Functionally, component of the cytochrome b6-f complex, which mediates electron transfer between photosystem II (PSII) and photosystem I (PSI), cyclic electron flow around PSI, and state transitions. This Citrus sinensis (Sweet orange) protein is Cytochrome f.